The sequence spans 75 residues: uncharacterized protein (75 aa).

Positions 19-38 (FHNTAPSKTNVNVPRANKSQ) are enriched in polar residues. Positions 19–42 (FHNTAPSKTNVNVPRANKSQSKGK) are disordered. Residues 47–66 (LLVLVGTLALVTSVISVNYQ) form a helical membrane-spanning segment.

It is found in the membrane. This is an uncharacterized protein from Saccharomyces cerevisiae (strain ATCC 204508 / S288c) (Baker's yeast).